We begin with the raw amino-acid sequence, 92 residues long: Probable acyl carrier protein (92 aa).

The Carrier domain occupies 11–92; sequence QVTFEELSAL…QVNATLRTAV (82 aa). Ser49 carries the post-translational modification O-(pantetheine 4'-phosphoryl)serine.

In terms of processing, 4'-phosphopantetheine is transferred from CoA to a specific serine of the apo-ACP-like protein.

Its function is as follows. Involved in developmentally regulated synthesis of a compound biosynthetically related to polyketide antibiotics which is essential for spore color in Streptomyces halstedii. The protein is Probable acyl carrier protein (sch3) of Streptomyces halstedii.